Reading from the N-terminus, the 472-residue chain is Serine/threonine-protein kinase ULK3 (472 aa).

One can recognise a Protein kinase domain in the interval 14 to 270; it reads FILTERLGSG…FQDFFAHPWV (257 aa). ATP-binding positions include 20–28 and Lys-44; that span reads LGSGTYATV. Asp-137 serves as the catalytic Proton acceptor. A Phosphoserine modification is found at Ser-176. Residues 281-347 form the MIT 1 domain; sequence LAQATALVVE…VSRAEELKAI (67 aa). Phosphoserine; by autocatalysis is present on residues Ser-350 and Ser-384. Positions 376-444 constitute an MIT 2 domain; it reads LLAALEVASA…ARAEYLKEQI (69 aa). A Phosphoserine modification is found at Ser-464.

This sequence belongs to the protein kinase superfamily. Ser/Thr protein kinase family. APG1/unc-51/ULK1 subfamily. In terms of assembly, interacts (via protein kinase domain) with SUFU. In terms of processing, autophosphorylated. Autophosphorylation is blocked by interaction with SUFU.

Its subcellular location is the cytoplasm. It carries out the reaction L-seryl-[protein] + ATP = O-phospho-L-seryl-[protein] + ADP + H(+). The enzyme catalyses L-threonyl-[protein] + ATP = O-phospho-L-threonyl-[protein] + ADP + H(+). Functionally, serine/threonine protein kinase that acts as a regulator of Sonic hedgehog (SHH) signaling and autophagy. Acts as a negative regulator of SHH signaling in the absence of SHH ligand: interacts with SUFU, thereby inactivating the protein kinase activity and preventing phosphorylation of GLI proteins (GLI1, GLI2 and/or GLI3). Positively regulates SHH signaling in the presence of SHH: dissociates from SUFU, autophosphorylates and mediates phosphorylation of GLI2, activating it and promoting its nuclear translocation. Phosphorylates in vitro GLI2, as well as GLI1 and GLI3, although less efficiently. Also acts as a regulator of autophagy: following cellular senescence, able to induce autophagy. This Rattus norvegicus (Rat) protein is Serine/threonine-protein kinase ULK3 (Ulk3).